The chain runs to 304 residues: uncharacterized protein (304 aa).

NAD(+)-binding positions include glycine 136–isoleucine 137, valine 215–arginine 217, and aspartate 241. Residue arginine 217 is part of the active site. Residue glutamate 246 is part of the active site. Histidine 265 (proton donor) is an active-site residue. NAD(+) is bound at residue histidine 265 to asparagine 268.

It belongs to the D-isomer specific 2-hydroxyacid dehydrogenase family.

This is an uncharacterized protein from Corynebacterium melassecola.